We begin with the raw amino-acid sequence, 133 residues long: Small ribosomal subunit protein uS11 (133 aa).

This sequence belongs to the universal ribosomal protein uS11 family. As to quaternary structure, part of the 30S ribosomal subunit. Interacts with proteins S7 and S18. Binds to IF-3.

In terms of biological role, located on the platform of the 30S subunit, it bridges several disparate RNA helices of the 16S rRNA. Forms part of the Shine-Dalgarno cleft in the 70S ribosome. This is Small ribosomal subunit protein uS11 from Chlamydia pneumoniae (Chlamydophila pneumoniae).